The sequence spans 126 residues: Large ribosomal subunit protein bL20c (126 aa).

It belongs to the bacterial ribosomal protein bL20 family.

Its subcellular location is the plastid. The protein localises to the chloroplast. Functionally, binds directly to 23S ribosomal RNA and is necessary for the in vitro assembly process of the 50S ribosomal subunit. It is not involved in the protein synthesizing functions of that subunit. The protein is Large ribosomal subunit protein bL20c of Pelargonium hortorum (Common geranium).